We begin with the raw amino-acid sequence, 171 residues long: Nucleoside-triphosphatase THEP1 (171 aa).

Residues 8–15 and 95–102 contribute to the ATP site; these read GPPGAGKS and VYLIDEIG.

The protein belongs to the THEP1 NTPase family.

The catalysed reaction is a ribonucleoside 5'-triphosphate + H2O = a ribonucleoside 5'-diphosphate + phosphate + H(+). Its function is as follows. Has nucleotide phosphatase activity towards ATP, GTP, CTP, TTP and UTP. May hydrolyze nucleoside diphosphates with lower efficiency. The chain is Nucleoside-triphosphatase THEP1 from Ignicoccus hospitalis (strain KIN4/I / DSM 18386 / JCM 14125).